Consider the following 502-residue polypeptide: Protein adenylyltransferase Fic (502 aa).

Residues 1–24 (MAMATGKATEEEQPEQGQQQQQLQ) form a disordered region. The span at 15 to 24 (EQGQQQQQLQ) shows a compositional bias: low complexity. The chain crosses the membrane as a helical span at residues 38 to 60 (FALFFIAGCLAAFGFHALTSSSG). 2 TPR repeats span residues 122-155 (AMGA…APKH) and 156-190 (PEVL…NPSN). Positions 247 to 252 (SVGIEG) match the Inhibitory (S/T)XXXE(G/N) motif motif. Residues Glu251 and 332-335 (VGGH) contribute to the ATP site. Positions 301 to 436 (ITLKDILELH…IRPFVRFIAD (136 aa)) constitute a Fido domain. His379 is an active-site residue. ATP is bound by residues 383 to 390 (DGNGRTSR), 415 to 416 (YY), and Asn423. Residues 478 to 502 (SPELYESGSGSGAGAGAGSGQKGMP) form a disordered region. A compositionally biased stretch (gly residues) spans 486–502 (SGSGAGAGAGSGQKGMP).

It belongs to the fic family. Homodimer.

The protein localises to the membrane. It carries out the reaction L-tyrosyl-[protein] + ATP = O-(5'-adenylyl)-L-tyrosyl-[protein] + diphosphate. It catalyses the reaction L-threonyl-[protein] + ATP = 3-O-(5'-adenylyl)-L-threonyl-[protein] + diphosphate. The catalysed reaction is 3-O-(5'-adenylyl)-L-threonyl-[protein] + H2O = L-threonyl-[protein] + AMP + H(+). With respect to regulation, the side chain of Glu-251 determines which of the two opposing activities (AMPylase or de-AMPylase) will take place. In response to endoplasmic reticulum stress, mediates de-AMPylase activity. Adenylyltransferase activity is inhibited by the inhibitory helix present at the N-terminus: Glu-251 binds ATP and competes with ATP-binding at Arg-390, thereby preventing adenylyltransferase activity. In unstressed cells, disengagement of Glu-251 promotes adenylyltransferase activity. Activation dissociates ATP-binding from Glu-251, allowing ordered binding of the entire ATP moiety with the alpha-phosphate in an orientation that is productive for accepting an incoming target hydroxyl side chain. In terms of biological role, protein that can both mediate the addition of adenosine 5'-monophosphate (AMP) to specific residues of target proteins (AMPylation), and the removal of the same modification from target proteins (de-AMPylation), depending on the context. The side chain of Glu-251 determines which of the two opposing activities (AMPylase or de-AMPylase) will take place. Acts as a key regulator of the unfolded protein response (UPR) by mediating AMPylation or de-AMPylation of Hsc70-3/BiP. In unstressed cells, acts as an adenylyltransferase by mediating AMPylation of Hsc70-3/BiP at 'Thr-518', thereby inactivating it. In response to endoplasmic reticulum stress, acts as a phosphodiesterase by mediating removal of ATP (de-AMPylation) from Hsc70-3/BiP at 'Thr-518', leading to restore HSPA5/BiP activity. This Drosophila mojavensis (Fruit fly) protein is Protein adenylyltransferase Fic.